The chain runs to 42 residues: Photosystem I reaction center subunit IX (42 aa).

The helical transmembrane segment at 8 to 28 (YLSTIPVVGAIWLTFTAGFII) threads the bilayer.

Belongs to the PsaJ family.

Its subcellular location is the plastid. The protein localises to the chloroplast thylakoid membrane. Its function is as follows. May help in the organization of the PsaE and PsaF subunits. The sequence is that of Photosystem I reaction center subunit IX from Gracilaria tenuistipitata var. liui (Red alga).